A 261-amino-acid chain; its full sequence is Imidazole glycerol phosphate synthase subunit HisF (261 aa).

Active-site residues include D16 and D135.

Belongs to the HisA/HisF family. In terms of assembly, heterodimer of HisH and HisF.

It localises to the cytoplasm. The catalysed reaction is 5-[(5-phospho-1-deoxy-D-ribulos-1-ylimino)methylamino]-1-(5-phospho-beta-D-ribosyl)imidazole-4-carboxamide + L-glutamine = D-erythro-1-(imidazol-4-yl)glycerol 3-phosphate + 5-amino-1-(5-phospho-beta-D-ribosyl)imidazole-4-carboxamide + L-glutamate + H(+). It functions in the pathway amino-acid biosynthesis; L-histidine biosynthesis; L-histidine from 5-phospho-alpha-D-ribose 1-diphosphate: step 5/9. Its function is as follows. IGPS catalyzes the conversion of PRFAR and glutamine to IGP, AICAR and glutamate. The HisF subunit catalyzes the cyclization activity that produces IGP and AICAR from PRFAR using the ammonia provided by the HisH subunit. The chain is Imidazole glycerol phosphate synthase subunit HisF from Mycolicibacterium smegmatis (strain ATCC 700084 / mc(2)155) (Mycobacterium smegmatis).